Here is a 354-residue protein sequence, read N- to C-terminus: Uroporphyrinogen decarboxylase (354 aa).

Residues 27-31 (RQAGR), aspartate 77, tyrosine 154, threonine 209, and histidine 327 each bind substrate.

It belongs to the uroporphyrinogen decarboxylase family. Homodimer.

It localises to the cytoplasm. The enzyme catalyses uroporphyrinogen III + 4 H(+) = coproporphyrinogen III + 4 CO2. It participates in porphyrin-containing compound metabolism; protoporphyrin-IX biosynthesis; coproporphyrinogen-III from 5-aminolevulinate: step 4/4. In terms of biological role, catalyzes the decarboxylation of four acetate groups of uroporphyrinogen-III to yield coproporphyrinogen-III. This is Uroporphyrinogen decarboxylase from Salmonella heidelberg (strain SL476).